We begin with the raw amino-acid sequence, 170 residues long: Peptide deformylase (170 aa).

Fe cation is bound by residues C93 and H135. The active site involves E136. H139 contributes to the Fe cation binding site.

The protein belongs to the polypeptide deformylase family. The cofactor is Fe(2+).

The catalysed reaction is N-terminal N-formyl-L-methionyl-[peptide] + H2O = N-terminal L-methionyl-[peptide] + formate. Its function is as follows. Removes the formyl group from the N-terminal Met of newly synthesized proteins. Requires at least a dipeptide for an efficient rate of reaction. N-terminal L-methionine is a prerequisite for activity but the enzyme has broad specificity at other positions. This Syntrophobacter fumaroxidans (strain DSM 10017 / MPOB) protein is Peptide deformylase.